A 274-amino-acid chain; its full sequence is Acyl-[acyl-carrier-protein]--UDP-N-acetylglucosamine O-acyltransferase (274 aa).

The protein belongs to the transferase hexapeptide repeat family. LpxA subfamily. In terms of assembly, homotrimer.

Its subcellular location is the cytoplasm. The enzyme catalyses a (3R)-hydroxyacyl-[ACP] + UDP-N-acetyl-alpha-D-glucosamine = a UDP-3-O-[(3R)-3-hydroxyacyl]-N-acetyl-alpha-D-glucosamine + holo-[ACP]. It participates in glycolipid biosynthesis; lipid IV(A) biosynthesis; lipid IV(A) from (3R)-3-hydroxytetradecanoyl-[acyl-carrier-protein] and UDP-N-acetyl-alpha-D-glucosamine: step 1/6. Its function is as follows. Involved in the biosynthesis of lipid A, a phosphorylated glycolipid that anchors the lipopolysaccharide to the outer membrane of the cell. The protein is Acyl-[acyl-carrier-protein]--UDP-N-acetylglucosamine O-acyltransferase of Bartonella quintana (strain Toulouse) (Rochalimaea quintana).